Consider the following 327-residue polypeptide: Regulatory protein MsrR (327 aa).

The span at 1-18 (MDKETNDNEYRRQSEHRT) shows a compositional bias: basic and acidic residues. The disordered stretch occupies residues 1–24 (MDKETNDNEYRRQSEHRTSAPKRK). Topologically, residues 1–31 (MDKETNDNEYRRQSEHRTSAPKRKKKKKIRK) are cytoplasmic. A helical; Signal-anchor for type II membrane protein transmembrane segment spans residues 32 to 52 (LPIILLIVVILLIALVVYIVH). Topologically, residues 53 to 327 (SYNSGVEYAK…QAIKDFLDED (275 aa)) are extracellular.

It belongs to the LytR/CpsA/Psr (LCP) family.

The protein resides in the cell membrane. Involved in SarA attenuation. Affects resistance to oxacillin and teicoplanin, as well as the synthesis of virulence factors. In Staphylococcus aureus (strain Mu50 / ATCC 700699), this protein is Regulatory protein MsrR (msrR).